Consider the following 72-residue polypeptide: Putative DNA-directed RNA polymerase subunit omega (72 aa).

It belongs to the RNA polymerase subunit omega family.

It is found in the plastid. It localises to the chloroplast. The enzyme catalyses RNA(n) + a ribonucleoside 5'-triphosphate = RNA(n+1) + diphosphate. Its function is as follows. May be involved in RNA polymerase activity. The protein is Putative DNA-directed RNA polymerase subunit omega (rpoZ) of Cyanidium caldarium (Red alga).